The primary structure comprises 822 residues: Glycerol-3-phosphate acyltransferase (822 aa).

Positions 304–309 (CHRSHM) match the HXXXXD motif motif.

This sequence belongs to the GPAT/DAPAT family.

Its subcellular location is the cell inner membrane. It carries out the reaction sn-glycerol 3-phosphate + an acyl-CoA = a 1-acyl-sn-glycero-3-phosphate + CoA. It participates in phospholipid metabolism; CDP-diacylglycerol biosynthesis; CDP-diacylglycerol from sn-glycerol 3-phosphate: step 1/3. This Yersinia enterocolitica serotype O:8 / biotype 1B (strain NCTC 13174 / 8081) protein is Glycerol-3-phosphate acyltransferase.